Reading from the N-terminus, the 206-residue chain is LexA repressor (206 aa).

The H-T-H motif DNA-binding region spans 28–48; sequence VREIGEAVGLASSSTVHGHLS. Residues Ser129 and Lys167 each act as for autocatalytic cleavage activity in the active site.

Belongs to the peptidase S24 family. As to quaternary structure, homodimer.

It carries out the reaction Hydrolysis of Ala-|-Gly bond in repressor LexA.. In terms of biological role, represses a number of genes involved in the response to DNA damage (SOS response), including recA and lexA. In the presence of single-stranded DNA, RecA interacts with LexA causing an autocatalytic cleavage which disrupts the DNA-binding part of LexA, leading to derepression of the SOS regulon and eventually DNA repair. The sequence is that of LexA repressor from Staphylococcus epidermidis (strain ATCC 35984 / DSM 28319 / BCRC 17069 / CCUG 31568 / BM 3577 / RP62A).